The primary structure comprises 437 residues: Vacuolar cation/proton exchanger 2 (437 aa).

Residues 1–29 form a disordered region; the sequence is MMGAEKAEGMEELELEEGGGSPSPSPMTA. At 1–65 the chain is on the cytoplasmic side; the sequence is MMGAEKAEGM…KWRRALTSVR (65 aa). Residues 66–86 form a helical membrane-spanning segment; the sequence is VVILQAKINVLLPFGPLAVML. Residues 87–88 lie on the Extracellular side of the membrane; sequence HY. Residues 89–109 form a helical membrane-spanning segment; the sequence is LSANHQGWVFLFSLIGITPLA. Residues 110-126 are Cytoplasmic-facing; the sequence is ERLGYATEQLALYTGPT. The helical transmembrane segment at 127-147 threads the bilayer; that stretch reads IGGLLNATFGNATEMIISLYA. Residues 136-171 form a cation selection region; it reads GNATEMIISLYALKNGMIRVVQQSLLGSILSNMLLV. Topologically, residues 148-161 are extracellular; it reads LKNGMIRVVQQSLL. The helical transmembrane segment at 162-182 threads the bilayer; the sequence is GSILSNMLLVLGCAFFAGGLV. Residues 183–194 lie on the Cytoplasmic side of the membrane; that stretch reads HPSRDQVFNKAS. The chain crosses the membrane as a helical span at residues 195–215; that stretch reads AVVNSGLLLMAVLGLMFPAVL. Topologically, residues 216 to 228 are extracellular; it reads HFTHSEVQYGKSE. The helical transmembrane segment at 229 to 249 threads the bilayer; it reads VSLSRFSSCIMLVAYASYLFF. At 250–281 the chain is on the cytoplasmic side; it reads QLKSQRSLYSPIGEQEEEVTEDEEEEKEITQG. Residues 282 to 302 traverse the membrane as a helical segment; it reads EAICWLFVLTIWISILSGYLV. Residues 303-310 are Extracellular-facing; it reads DAIQGASE. Residues 311–331 traverse the membrane as a helical segment; that stretch reads SLNMPVAFISVILLPIVGNAA. The cation selection stretch occupies residues 328–363; it reads GNAAEHASAIMFAMKDKLDITLGVAIGSSTQISMFV. The Cytoplasmic portion of the chain corresponds to 332–352; it reads EHASAIMFAMKDKLDITLGVA. Residues 353–373 traverse the membrane as a helical segment; sequence IGSSTQISMFVIPFCVVIGWI. At 374-379 the chain is on the extracellular side; it reads MGQQMD. Residues 380–400 form a helical membrane-spanning segment; the sequence is LNFQLFETATLFITVLVVAFM. At 401 to 408 the chain is on the cytoplasmic side; the sequence is LQEGTSNY. The chain crosses the membrane as a helical span at residues 409-429; that stretch reads FKGLMLILCYLIVAASFFVHV. Residues 430–437 are Extracellular-facing; sequence DPDSSNNK.

Belongs to the Ca(2+):cation antiporter (CaCA) (TC 2.A.19) family. Cation/proton exchanger (CAX) subfamily. In terms of tissue distribution, expressed in roots and shoots.

The protein resides in the vacuole membrane. Its function is as follows. Vacuolar cation/proton exchanger (CAX). Translocates Ca(2+) and other metal ions into vacuoles using the proton gradient formed by H(+)-ATPase and H(+)-pyrophosphatase. This Oryza sativa subsp. japonica (Rice) protein is Vacuolar cation/proton exchanger 2 (CAX2).